Consider the following 159-residue polypeptide: Ribosomal RNA large subunit methyltransferase H (159 aa).

S-adenosyl-L-methionine-binding positions include Leu-76, Gly-108, and 127–132; that span reads FGRLTL.

It belongs to the RNA methyltransferase RlmH family. In terms of assembly, homodimer.

It localises to the cytoplasm. It carries out the reaction pseudouridine(1915) in 23S rRNA + S-adenosyl-L-methionine = N(3)-methylpseudouridine(1915) in 23S rRNA + S-adenosyl-L-homocysteine + H(+). In terms of biological role, specifically methylates the pseudouridine at position 1915 (m3Psi1915) in 23S rRNA. The protein is Ribosomal RNA large subunit methyltransferase H of Listeria welshimeri serovar 6b (strain ATCC 35897 / DSM 20650 / CCUG 15529 / CIP 8149 / NCTC 11857 / SLCC 5334 / V8).